Here is a 300-residue protein sequence, read N- to C-terminus: Phosphoribosylaminoimidazole-succinocarboxamide synthase (300 aa).

This sequence belongs to the SAICAR synthetase family.

It catalyses the reaction 5-amino-1-(5-phospho-D-ribosyl)imidazole-4-carboxylate + L-aspartate + ATP = (2S)-2-[5-amino-1-(5-phospho-beta-D-ribosyl)imidazole-4-carboxamido]succinate + ADP + phosphate + 2 H(+). The protein operates within purine metabolism; IMP biosynthesis via de novo pathway; 5-amino-1-(5-phospho-D-ribosyl)imidazole-4-carboxamide from 5-amino-1-(5-phospho-D-ribosyl)imidazole-4-carboxylate: step 1/2. In Methylibium petroleiphilum (strain ATCC BAA-1232 / LMG 22953 / PM1), this protein is Phosphoribosylaminoimidazole-succinocarboxamide synthase.